The following is an 806-amino-acid chain: MVHFKNCPDPSLNANSQSHPEFSSELEHIKTRMQNFIKHSVTDQNIEVTDARVTAEGEVTSLLKERLDKEYYRLLSKITREVNVADFGAVPDGRDNTEAFRKAIGNGRVKVHVPAGEYLVQGIKLPSWTTIVGQGKGITVIKLHEDTPAHEWVITNDDYQNGNRNIFVQGMSLDWNPSRQCGVRNPGGQFSSCLTFAKVEYGWIKDVEAINAGLHGIDITSPTYDHLPDTDWTKDGSRYIWIDNCVTYGSGDDGITTHYSEYIFISNCHSGNPRGTEFAEGVSNSNGIEIDDGSRHVWLLNNFTSGNIRGVEVKAHELWPASQNVHIIGHISYRDVRAFDLRHIGHHQITDPESTTAYDVTLIDCSAVEPVFNSLYDAVTPRALVISAYKNVNVSGFTAIGDPDYDYKENPVVALQYRSQNITINGIKIRGFKKAGVDINLSGGSNKTDYIKISNFDIYKSAPKGISIGGGLYNVNILNGTMITDNGTVAIQSPNNQATILGVQSEGYSVAASIKGQTYQQVPINLKGGIQLATTSGFAVNQTSAVIAGTGDITARGERNAVISSSGGSSTEGSRALIASSNNAHIRGNQASRTILSSENIILEEPYTVAGGHQSIKWLLDSVRGNGTFAGAISSSLGGYGEYFESSTGQLIHTGTIVTLRGEKIVPANVGDYMLGVISETSAFISGASSFVWQGRYLTNEFGGFIYETVTDEESGELIRVPKQNPDYDTALEANYHSRAARDEWHVVGLVGQHYVRIDETVNQGDYLTAHNGIGTKATEGSWKVMKITSAYTSEKGYGIALTVIK.

The disordered stretch occupies residues 1–23 (MVHFKNCPDPSLNANSQSHPEFS). Over residues 12–21 (LNANSQSHPE) the composition is skewed to polar residues. 6 PbH1 repeats span residues 199-221 (VEYG…DITS), 237-259 (SRYI…TTHY), 260-292 (SEYI…EIDD), 294-315 (SRHV…EVKA), 419-441 (SQNI…DINL), and 448-470 (TDYI…SIGG).

The sequence is that of Putative phage-related protein YobO (yobO) from Bacillus subtilis (strain 168).